An 876-amino-acid chain; its full sequence is Alanine--tRNA ligase (876 aa).

Positions 565, 569, 667, and 671 each coordinate Zn(2+).

Belongs to the class-II aminoacyl-tRNA synthetase family. It depends on Zn(2+) as a cofactor.

The protein localises to the cytoplasm. It carries out the reaction tRNA(Ala) + L-alanine + ATP = L-alanyl-tRNA(Ala) + AMP + diphosphate. Its function is as follows. Catalyzes the attachment of alanine to tRNA(Ala) in a two-step reaction: alanine is first activated by ATP to form Ala-AMP and then transferred to the acceptor end of tRNA(Ala). Also edits incorrectly charged Ser-tRNA(Ala) and Gly-tRNA(Ala) via its editing domain. The chain is Alanine--tRNA ligase from Staphylococcus aureus (strain USA300).